We begin with the raw amino-acid sequence, 97 residues long: Co-chaperonin GroES (97 aa).

Belongs to the GroES chaperonin family. As to quaternary structure, heptamer of 7 subunits arranged in a ring. Interacts with the chaperonin GroEL.

The protein localises to the cytoplasm. Together with the chaperonin GroEL, plays an essential role in assisting protein folding. The GroEL-GroES system forms a nano-cage that allows encapsulation of the non-native substrate proteins and provides a physical environment optimized to promote and accelerate protein folding. GroES binds to the apical surface of the GroEL ring, thereby capping the opening of the GroEL channel. The chain is Co-chaperonin GroES from Buchnera aphidicola subsp. Tuberolachnus salignus.